A 103-amino-acid polypeptide reads, in one-letter code: Histone H4 (103 aa).

Over residues 1-14 (MTGRGKGGKGLGKG) the composition is skewed to gly residues. Positions 1-20 (MTGRGKGGKGLGKGGAKRHR) are disordered. K6 and K13 each carry N6-acetyl-N6-methyllysine; alternate. Residues 17–21 (KRHRK) mediate DNA binding.

It belongs to the histone H4 family. In terms of assembly, the nucleosome is a histone octamer containing two molecules each of H2A, H2B, H3 and H4 assembled in one H3-H4 heterotetramer and two H2A-H2B heterodimers. The octamer wraps approximately 147 bp of DNA.

Its subcellular location is the nucleus. The protein resides in the chromosome. Functionally, core component of nucleosome. Nucleosomes wrap and compact DNA into chromatin, limiting DNA accessibility to the cellular machineries which require DNA as a template. Histones thereby play a central role in transcription regulation, DNA repair, DNA replication and chromosomal stability. DNA accessibility is regulated via a complex set of post-translational modifications of histones, also called histone code, and nucleosome remodeling. The sequence is that of Histone H4 (His4) from Myrmica ruginodis (Red ant).